We begin with the raw amino-acid sequence, 93 residues long: Beta-defensin 128 (93 aa).

A signal peptide spans 1–18 (MKLFLVLIILLFEVLTDG). 3 disulfide bridges follow: cysteine 24–cysteine 52, cysteine 32–cysteine 46, and cysteine 36–cysteine 53.

This sequence belongs to the beta-defensin family.

The protein localises to the secreted. Its function is as follows. Has antibacterial activity. In Macaca fascicularis (Crab-eating macaque), this protein is Beta-defensin 128 (DEFB128).